A 327-amino-acid chain; its full sequence is Flap endonuclease 1 (327 aa).

Positions 1-98 (MGVKLKDIIQ…ETIDQRRQTR (98 aa)) are N-domain. Mg(2+) contacts are provided by D27, D80, E152, E154, D173, D175, and D226. The segment at 116-246 (EARKYAMRSS…KTALKLAKKG (131 aa)) is I-domain. Positions 319–327 (SQKSLEDWF) are interaction with PCNA.

It belongs to the XPG/RAD2 endonuclease family. FEN1 subfamily. Interacts with PCNA. PCNA stimulates the nuclease activity without altering cleavage specificity. It depends on Mg(2+) as a cofactor.

In terms of biological role, structure-specific nuclease with 5'-flap endonuclease and 5'-3' exonuclease activities involved in DNA replication and repair. During DNA replication, cleaves the 5'-overhanging flap structure that is generated by displacement synthesis when DNA polymerase encounters the 5'-end of a downstream Okazaki fragment. Binds the unpaired 3'-DNA end and kinks the DNA to facilitate 5' cleavage specificity. Cleaves one nucleotide into the double-stranded DNA from the junction in flap DNA, leaving a nick for ligation. Also involved in the base excision repair (BER) pathway. Acts as a genome stabilization factor that prevents flaps from equilibrating into structures that lead to duplications and deletions. Also possesses 5'-3' exonuclease activity on nicked or gapped double-stranded DNA. This Methanobrevibacter smithii (strain ATCC 35061 / DSM 861 / OCM 144 / PS) protein is Flap endonuclease 1.